Consider the following 325-residue polypeptide: Phospholipid phosphatase-related protein type 1 (325 aa).

N-linked (GlcNAc...) asparagine glycosylation is present at asparagine 5. 3 helical membrane passes run 13–33 (IIPC…LLAY), 67–87 (FISP…IIFI), and 127–147 (FIGV…AGQV). N-linked (GlcNAc...) asparagine glycosylation is present at asparagine 163. 3 consecutive transmembrane segments (helical) span residues 201-219 (AALS…TSTI), 226-244 (LAKP…LTGL), and 257-277 (VIAG…CVVH). Residue serine 307 is modified to Phosphoserine. Asparagine 316 is a glycosylation site (N-linked (GlcNAc...) asparagine).

This sequence belongs to the PA-phosphatase related phosphoesterase family. In terms of tissue distribution, highly expressed in the brain. Also found in the liver, kidney and testis. In the brain shows a strongest expression in the hippocampus and cerebellum.

It is found in the cell membrane. It localises to the cell projection. The protein resides in the neuron projection. Functionally, may play a role in neurite outgrowth and neurogenesis. This Rattus norvegicus (Rat) protein is Phospholipid phosphatase-related protein type 1.